We begin with the raw amino-acid sequence, 268 residues long: Ribosomal RNA large subunit methyltransferase E (268 aa).

Residues 1-60 are disordered; it reads MKPPRSRSGSSKDTGPKRIPGKALKSASNPGENDATLDSATARTARNKTVSLRTARGRTT. Polar residues predominate over residues 26 to 52; that stretch reads SASNPGENDATLDSATARTARNKTVSL. 5 residues coordinate S-adenosyl-L-methionine: Gly-115, Trp-117, Asp-133, Asp-149, and Asp-173. The active-site Proton acceptor is the Lys-213.

This sequence belongs to the class I-like SAM-binding methyltransferase superfamily. RNA methyltransferase RlmE family.

It localises to the cytoplasm. The enzyme catalyses uridine(2552) in 23S rRNA + S-adenosyl-L-methionine = 2'-O-methyluridine(2552) in 23S rRNA + S-adenosyl-L-homocysteine + H(+). Specifically methylates the uridine in position 2552 of 23S rRNA at the 2'-O position of the ribose in the fully assembled 50S ribosomal subunit. This Gluconobacter oxydans (strain 621H) (Gluconobacter suboxydans) protein is Ribosomal RNA large subunit methyltransferase E.